The primary structure comprises 962 residues: DNA primase (962 aa).

The segment at 894–932 (CLRARHARSPPARTFVALSVDAHDRLCISLSQQCFATKC) adopts a CHC2-type zinc-finger fold.

The protein belongs to the herpesviridae DNA primase family. As to quaternary structure, associates with the helicase and the primase-associated factor to form the helicase-primase factor.

The protein resides in the host nucleus. Its function is as follows. Essential component of the helicase/primase complex. Unwinds the DNA at the replication forks and generates single-stranded DNA for both leading and lagging strand synthesis. The primase initiates primer synthesis and thereby produces large amount of short RNA primers on the lagging strand that the polymerase elongates using dNTPs. This is DNA primase (UL52) from Sus scrofa (Pig).